Here is a 127-residue protein sequence, read N- to C-terminus: MRPLDIDEVEAPEEVEVLEPEEDFEQFLLPVINEMREDIASLIREHGRAYLRTRSKLWEMDNMLIQIKTQVEASEESALNHVQHPSGEADERVSELCEKAEEKAKEIAKMAEMLVELVWRIERSESS.

The stretch at 87–118 (GEADERVSELCEKAEEKAKEIAKMAEMLVELV) forms a coiled coil.

Belongs to the MORF4 family-associated protein family.

The polypeptide is MORF4 family-associated protein 1-like 1 (MRFAP1L1) (Homo sapiens (Human)).